We begin with the raw amino-acid sequence, 390 residues long: Isoaspartyl dipeptidase (390 aa).

Zn(2+) contacts are provided by His68 and His70. Residues 75–77 (GGE), Thr106, and Tyr137 contribute to the substrate site. Residue Lys162 participates in Zn(2+) binding. Lys162 is subject to N6-carboxylysine. Arg169 lines the substrate pocket. Residues His201 and His230 each coordinate Zn(2+). Residue Arg233 coordinates substrate. Asp285 serves as a coordination point for Zn(2+). Asp285 (proton acceptor) is an active-site residue. Ser289 serves as a coordination point for substrate.

It belongs to the peptidase M38 family. The cofactor is Zn(2+). Requires Co(2+) as cofactor. In terms of processing, carboxylation allows a single lysine to coordinate two zinc ions.

The protein resides in the cytoplasm. With respect to regulation, P-hydroxymercuribenzoate causes a slight inhibition (8 to 17 %). Iodoacetamide, o-iodosobenzoate and ammonium persulfate do not inhibit the enzyme activity. In terms of biological role, catalyzes the hydrolytic cleavage of a subset of L-isoaspartyl (L-beta-aspartyl) dipeptides. Used to degrade proteins damaged by L-isoaspartyl residues formation. The best substrate for the enzyme reported thus far is iso-Asp-Leu. In Escherichia coli (strain K12), this protein is Isoaspartyl dipeptidase (iadA).